We begin with the raw amino-acid sequence, 258 residues long: MSLIDPRAIIDPTAVLADDVEVGPWSIVGAGVEIGEGTVIGPHVILKGPTRIGKHNRIYQFSSVGEDTPDLKYKGEETRLVIGDHNVIREGVTIHRGTVQDRSETTLGDHNLVMAYAHIGHDSVIGNHCILVNNTALAGHVHVDDWAILSGFTLVHQYCHIGAHSFSGMGTAIGKDVPAFVTVFGNPAEARSMNFEGMRRRGFSEDAIHALRRAYKTVYRQGLTVDQALAELAEPAAQFPEVAVFRDSIQSSTRGITR.

This sequence belongs to the transferase hexapeptide repeat family. LpxA subfamily. As to quaternary structure, homotrimer.

It is found in the cytoplasm. The catalysed reaction is a (3R)-hydroxyacyl-[ACP] + UDP-N-acetyl-alpha-D-glucosamine = a UDP-3-O-[(3R)-3-hydroxyacyl]-N-acetyl-alpha-D-glucosamine + holo-[ACP]. It participates in glycolipid biosynthesis; lipid IV(A) biosynthesis; lipid IV(A) from (3R)-3-hydroxytetradecanoyl-[acyl-carrier-protein] and UDP-N-acetyl-alpha-D-glucosamine: step 1/6. Functionally, involved in the biosynthesis of lipid A, a phosphorylated glycolipid that anchors the lipopolysaccharide to the outer membrane of the cell. The chain is Acyl-[acyl-carrier-protein]--UDP-N-acetylglucosamine O-acyltransferase from Pseudomonas fluorescens (strain ATCC BAA-477 / NRRL B-23932 / Pf-5).